We begin with the raw amino-acid sequence, 330 residues long: 4-hydroxythreonine-4-phosphate dehydrogenase (330 aa).

Position 133 (Thr133) interacts with substrate. His161, His206, and His261 together coordinate a divalent metal cation. Substrate-binding residues include Lys269, Asn278, and Arg287.

This sequence belongs to the PdxA family. As to quaternary structure, homodimer. The cofactor is Zn(2+). It depends on Mg(2+) as a cofactor. Co(2+) serves as cofactor.

The protein resides in the cytoplasm. It catalyses the reaction 4-(phosphooxy)-L-threonine + NAD(+) = 3-amino-2-oxopropyl phosphate + CO2 + NADH. It functions in the pathway cofactor biosynthesis; pyridoxine 5'-phosphate biosynthesis; pyridoxine 5'-phosphate from D-erythrose 4-phosphate: step 4/5. Functionally, catalyzes the NAD(P)-dependent oxidation of 4-(phosphooxy)-L-threonine (HTP) into 2-amino-3-oxo-4-(phosphooxy)butyric acid which spontaneously decarboxylates to form 3-amino-2-oxopropyl phosphate (AHAP). In Xylella fastidiosa (strain Temecula1 / ATCC 700964), this protein is 4-hydroxythreonine-4-phosphate dehydrogenase.